Reading from the N-terminus, the 305-residue chain is uncharacterized protein (305 aa).

Residues 208–236 (SYAQSPAVKKKKWRHSGGKKNNPRENHID) are disordered. Residues 215-225 (VKKKKWRHSGG) are compositionally biased toward basic residues.

This is an uncharacterized protein from Bacillus subtilis (strain 168).